Reading from the N-terminus, the 445-residue chain is Methionine aminopeptidase 2-3 (445 aa).

A disordered region spans residues 14 to 115; sequence ISDADANGAD…ENRYRTTSEE (102 aa). Residues 38-47 are compositionally biased toward acidic residues; that stretch reads EDDDSDDDVA. Residues 60–75 are compositionally biased toward basic residues; that stretch reads AKKKKNKKRKPKKKQP. Residues 85–95 show a composition bias toward polar residues; that stretch reads PLSQLFPNNTY. The span at 97-115 shows a compositional bias: basic and acidic residues; it reads KGEEVEYKDENRYRTTSEE. His-198 lines the substrate pocket. Residues Asp-218, Asp-229, and His-298 each coordinate a divalent metal cation. A substrate-binding site is contributed by His-306. 2 residues coordinate a divalent metal cation: Glu-331 and Glu-426.

It belongs to the peptidase M24A family. Methionine aminopeptidase eukaryotic type 2 subfamily. Requires Co(2+) as cofactor. Zn(2+) is required as a cofactor. The cofactor is Mn(2+). Fe(2+) serves as cofactor.

It localises to the cytoplasm. It catalyses the reaction Release of N-terminal amino acids, preferentially methionine, from peptides and arylamides.. Cotranslationally removes the N-terminal methionine from nascent proteins. The N-terminal methionine is often cleaved when the second residue in the primary sequence is small and uncharged (Met-Ala-, Cys, Gly, Pro, Ser, Thr, or Val). The protein is Methionine aminopeptidase 2-3 of Neosartorya fischeri (strain ATCC 1020 / DSM 3700 / CBS 544.65 / FGSC A1164 / JCM 1740 / NRRL 181 / WB 181) (Aspergillus fischerianus).